The chain runs to 959 residues: Glycine dehydrogenase (decarboxylating) (959 aa).

The residue at position 704 (K704) is an N6-(pyridoxal phosphate)lysine.

This sequence belongs to the GcvP family. As to quaternary structure, the glycine cleavage system is composed of four proteins: P, T, L and H. The cofactor is pyridoxal 5'-phosphate.

The enzyme catalyses N(6)-[(R)-lipoyl]-L-lysyl-[glycine-cleavage complex H protein] + glycine + H(+) = N(6)-[(R)-S(8)-aminomethyldihydrolipoyl]-L-lysyl-[glycine-cleavage complex H protein] + CO2. The glycine cleavage system catalyzes the degradation of glycine. The P protein binds the alpha-amino group of glycine through its pyridoxal phosphate cofactor; CO(2) is released and the remaining methylamine moiety is then transferred to the lipoamide cofactor of the H protein. This is Glycine dehydrogenase (decarboxylating) from Parasynechococcus marenigrum (strain WH8102).